The following is a 320-amino-acid chain: NAC domain-containing protein 18 (320 aa).

Positions 1-22 are disordered; the sequence is MESTDSSGGPPPPQPNLPPGFR. Over residues 9–18 the composition is skewed to pro residues; it reads GPPPPQPNLP. The NAC domain occupies 17–177; that stretch reads LPPGFRFHPT…DWVLCRIYKK (161 aa). Residues 118–183 mediate DNA binding; that stretch reads VGVKKALVFY…IYKKNNSTAS (66 aa).

In terms of tissue distribution, restricted primarily to the region of the embryo including the SAM. Expressed in the outer integument, but seems not expressed in the embryo at the torpedo stage.

Its subcellular location is the nucleus. Functionally, may encode a transcription factor involved in the elaboration of shoot apical meristems (SAM). Together with NAC056/NARS1, regulates embryogenesis by regulating the development and degeneration of ovule integuments, a process required for intertissue communication between the embryo and the maternal integument. In Arabidopsis thaliana (Mouse-ear cress), this protein is NAC domain-containing protein 18 (NAC018).